The chain runs to 205 residues: Photosystem I assembly protein Ycf4 (205 aa).

The next 2 helical transmembrane spans lie at 23–43 and 86–106; these read WATVILIGSFGFLLTGISSYI and LMCFYGSLGFLLSIYWWCLIF.

The protein belongs to the Ycf4 family.

The protein localises to the plastid. The protein resides in the chloroplast thylakoid membrane. Its function is as follows. Seems to be required for the assembly of the photosystem I complex. This Tetradesmus obliquus (Green alga) protein is Photosystem I assembly protein Ycf4.